Consider the following 440-residue polypeptide: Proline--tRNA ligase (440 aa).

It belongs to the class-II aminoacyl-tRNA synthetase family. ProS type 2 subfamily. As to quaternary structure, homodimer.

It localises to the cytoplasm. The enzyme catalyses tRNA(Pro) + L-proline + ATP = L-prolyl-tRNA(Pro) + AMP + diphosphate. Its function is as follows. Catalyzes the attachment of proline to tRNA(Pro) in a two-step reaction: proline is first activated by ATP to form Pro-AMP and then transferred to the acceptor end of tRNA(Pro). The protein is Proline--tRNA ligase of Xanthobacter autotrophicus (strain ATCC BAA-1158 / Py2).